Reading from the N-terminus, the 437-residue chain is Adenosylhomocysteinase (437 aa).

Residues threonine 54, aspartate 130, and glutamate 155 each contribute to the substrate site. 156 to 158 provides a ligand contact to NAD(+); the sequence is TTT. Substrate-binding residues include lysine 185 and aspartate 189. NAD(+) is bound by residues asparagine 190, 219 to 224, glutamate 242, asparagine 277, 298 to 300, and asparagine 345; these read GYGDVG and IGH.

The protein belongs to the adenosylhomocysteinase family. As to quaternary structure, homotetramer. Requires NAD(+) as cofactor.

Its subcellular location is the cytoplasm. The enzyme catalyses S-adenosyl-L-homocysteine + H2O = L-homocysteine + adenosine. It functions in the pathway amino-acid biosynthesis; L-homocysteine biosynthesis; L-homocysteine from S-adenosyl-L-homocysteine: step 1/1. Functionally, adenosylhomocysteine is a competitive inhibitor of S-adenosyl-L-methionine-dependent methyl transferase reactions; therefore adenosylhomocysteinase may play a key role in the control of methylations via regulation of the intracellular concentration of adenosylhomocysteine. This chain is Adenosylhomocysteinase, found in Leishmania donovani.